The sequence spans 248 residues: Probable transcriptional regulatory protein BOV_1660 (248 aa).

Belongs to the TACO1 family.

Its subcellular location is the cytoplasm. In Brucella ovis (strain ATCC 25840 / 63/290 / NCTC 10512), this protein is Probable transcriptional regulatory protein BOV_1660.